A 408-amino-acid polypeptide reads, in one-letter code: UPF0496 protein At5g66670 (408 aa).

Transmembrane regions (helical) follow at residues 239–259 (VVFA…AAMM) and 262–282 (PVLS…GMWC).

This sequence belongs to the UPF0496 family.

The protein resides in the membrane. This Arabidopsis thaliana (Mouse-ear cress) protein is UPF0496 protein At5g66670.